The primary structure comprises 814 residues: ATP-dependent RNA helicase dbp-7 (814 aa).

Residues 26–102 (GGRWRDRVKA…PPPPPTHAMK (77 aa)) form a disordered region. 2 stretches are compositionally biased toward basic and acidic residues: residues 28 to 42 (RWRD…EKGG) and 69 to 78 (QRTEDGDSGR). The Q motif signature appears at 145–174 (ENFLSLGLSRRVSQHLATKLEMKAPTAIQK). A Helicase ATP-binding domain is found at 178-384 (PQLVKEDSDA…EISLEDAVHI (207 aa)). 191-198 (AETGSGKT) contributes to the ATP binding site. Positions 313-316 (DEGD) match the DEAD box motif. In terms of domain architecture, Helicase C-terminal spans 422-622 (RLVTLIALLK…GFATNINVPG (201 aa)). 3 disordered regions span residues 464-483 (TPRA…KPNI), 662-695 (ESKS…PLLV), and 741-795 (GIGG…AGRR). Basic and acidic residues predominate over residues 467 to 477 (AEPEPKPEGEA). Residues 779 to 790 (DDDERDFGAADE) are compositionally biased toward acidic residues.

This sequence belongs to the DEAD box helicase family. DDX31/DBP7 subfamily.

The protein resides in the nucleus. It localises to the nucleolus. It carries out the reaction ATP + H2O = ADP + phosphate + H(+). Functionally, ATP-binding RNA helicase involved in the biogenesis of 60S ribosomal subunits and is required for the normal formation of 25S and 5.8S rRNAs. This is ATP-dependent RNA helicase dbp-7 (dbp-7) from Neurospora crassa (strain ATCC 24698 / 74-OR23-1A / CBS 708.71 / DSM 1257 / FGSC 987).